The sequence spans 79 residues: Acyl carrier protein (79 aa).

Residues 2-77 (SDIEARVRKI…SAIDYANTHQ (76 aa)) enclose the Carrier domain. At S37 the chain carries O-(pantetheine 4'-phosphoryl)serine.

Belongs to the acyl carrier protein (ACP) family. Post-translationally, 4'-phosphopantetheine is transferred from CoA to a specific serine of apo-ACP by AcpS. This modification is essential for activity because fatty acids are bound in thioester linkage to the sulfhydryl of the prosthetic group.

The protein localises to the cytoplasm. The protein operates within lipid metabolism; fatty acid biosynthesis. Its function is as follows. Carrier of the growing fatty acid chain in fatty acid biosynthesis. In Verminephrobacter eiseniae (strain EF01-2), this protein is Acyl carrier protein.